Here is a 54-residue protein sequence, read N- to C-terminus: Ovomucoid (54 aa).

The Kazal-like domain occupies 4 to 54; the sequence is VDCSDHPKPVCSLEYMPLCGSDSKTYSNKCDFCNAVVESNGTLTLSHFGKC. Disulfide bonds link Cys-6/Cys-36, Cys-14/Cys-33, and Cys-22/Cys-54. The N-linked (GlcNAc...) asparagine glycan is linked to Asn-43.

It is found in the secreted. This chain is Ovomucoid, found in Rhea americana (Greater rhea).